A 445-amino-acid polypeptide reads, in one-letter code: Maltoporin (445 aa).

The signal sequence occupies residues 1 to 25 (MKMKAKWLPIAAGVTAALASQAAFA).

This sequence belongs to the porin LamB (TC 1.B.3) family. As to quaternary structure, homotrimer formed of three 18-stranded antiparallel beta-barrels, containing three independent channels.

It is found in the cell outer membrane. The enzyme catalyses beta-maltose(in) = beta-maltose(out). Functionally, involved in the transport of maltose and maltodextrins. This Aeromonas salmonicida protein is Maltoporin.